The following is a 78-amino-acid chain: Protein GPR15LG (78 aa).

The signal sequence occupies residues 1–24; sequence MRLLALSGLLCMLLLCFCIFSSEG. 2 disulfide bridges follow: cysteine 37-cysteine 60 and cysteine 38-cysteine 57.

Interacts with SUSD2; the interaction is direct. In terms of tissue distribution, highly abundant in the testis, colon, eye, and tongue. Detected in the epithelial layer of the colon, but not the small intestine.

It is found in the secreted. Functionally, highly cationic protein that has multiple functions. Acts as a chemotactic factor that mediates lymphocytes recruitment to epithelia through binding and activation of the G-protein coupled receptor GPR15. May be a tumor suppressor; together with SUSD2 has a growth inhibitory effect on colon cancer cells which includes G1 cell cycle arrest. May regulate keratinocyte proliferation. In addition, through activation of Mas-related G protein-coupled receptors (MRGPRs) contributes to pruritogenesis by activating itch-selective sensory neurons and mast cells degranulation. Its function is as follows. Has antimicrobial activity against Gram-positive bacteria, including Staphylococcus aureus and Actinomyces spec., and Mycoplasma hominis and lentivirus. This Mus musculus (Mouse) protein is Protein GPR15LG (Gpr15lg).